The primary structure comprises 504 residues: MPIKFDVTQEHIESYPNFCIVTGVFNDSYLFPSTIQIDKMSQGYISSLLKRNNFNGSINQHLLLYDAPYFFNKLILLIGCGKKNEFKSQSYNTVIHYIINFCKKSSITKILLLLSELNIDGYDNYWKIRNSITLCNNECYIFNKFKNINDVTKKNITYEIISYIDKLDNNFQYCKQAVKDGLAIAKGLNIAKNLGNMPSNYCTPNYLSNKVQELSNYNTDLDIEIINELQLKTIGMHAYLAVGSGSIYPAVMPIIKYQKNPKGPNTNPIILIGKGVTFDSGGISIKPSDKMDEMKYDMCGAAAVYAIMSIVSELQLPLNIIGILAVSENMISSKSLKPGDILTTLSGQTIEILNTDAEGRLLLCDVLTYVERYNPEIVIDIATLTGACVIALGNHYSGLMSNDNNLSNNLIFASKQTRDYIWRLPLDENFEKQLESSCADIANVGGRSGGAITAACFLKKFAHKYKWMHLDIAGSAWISKNCVKSSTGRPVELLTQFLINISKI.

The Mn(2+) site is built by Lys-274 and Asp-279. Residue Lys-286 is part of the active site. The Mn(2+) site is built by Asp-297, Asp-356, and Glu-358. Arg-360 is an active-site residue.

This sequence belongs to the peptidase M17 family. Mn(2+) is required as a cofactor.

It is found in the cytoplasm. The catalysed reaction is Release of an N-terminal amino acid, Xaa-|-Yaa-, in which Xaa is preferably Leu, but may be other amino acids including Pro although not Arg or Lys, and Yaa may be Pro. Amino acid amides and methyl esters are also readily hydrolyzed, but rates on arylamides are exceedingly low.. It carries out the reaction Release of an N-terminal amino acid, preferentially leucine, but not glutamic or aspartic acids.. Functionally, presumably involved in the processing and regular turnover of intracellular proteins. Catalyzes the removal of unsubstituted N-terminal amino acids from various peptides. The sequence is that of Probable cytosol aminopeptidase from Blochmanniella floridana.